The chain runs to 107 residues: Ribonuclease P protein component 4 (107 aa).

Residues Cys-66, Cys-69, Cys-92, and Cys-95 each contribute to the Zn(2+) site.

This sequence belongs to the eukaryotic/archaeal RNase P protein component 4 family. As to quaternary structure, consists of a catalytic RNA component and at least 4-5 protein subunits. Requires Zn(2+) as cofactor.

It localises to the cytoplasm. It carries out the reaction Endonucleolytic cleavage of RNA, removing 5'-extranucleotides from tRNA precursor.. In terms of biological role, part of ribonuclease P, a protein complex that generates mature tRNA molecules by cleaving their 5'-ends. The protein is Ribonuclease P protein component 4 of Methanosarcina acetivorans (strain ATCC 35395 / DSM 2834 / JCM 12185 / C2A).